Consider the following 1031-residue polypeptide: Pre-mRNA-splicing factor SYF1 (1031 aa).

HAT repeat units follow at residues 28 to 60 (HLIPSADLPVEEDLLHNPENLRSWLSYIHNVKE), 90 to 122 (DGLQRLVSIYERAIAVFPTSYKLWKAYYLTRQS), 214 to 248 (KNGSYARRAFDRALRTLPPSLHGRVWGLYLRWAEI), and 250 to 269 (GGDAGERVWRRYLKVDPSLT). The disordered stretch occupies residues 346-368 (VEEKVDGEQPQVEGQEQQPQEEP). Residues 353 to 368 (EQPQVEGQEQQPQEEP) are compositionally biased toward low complexity. 8 HAT repeats span residues 452–487 (GEFERATATFERGLAAVVTIRDFTQIFDAYAEFSET), 610–646 (PDLEQARKIFERATKVPFKAVDELAEVWCEWAEMELR), 664–698 (PKNTKINYYDDNIPPQSRLFKSLKLWSYYSDLEES), 700–732 (GTVESTKAVYDKIMELKIANAQVIVNYATFLEE), 734–768 (KYFEESFKVYERGIELFHFPIAFEIWNIYLSKFVK), 773–807 (KKLERARDLFEQALENCPEKFCKPLYLMYAKLEEE), 845–879 (FGLPATRPIYERALESLPDKQTAEMCRRFARMERK), and 881–915 (GEIDRARAIYAHASQFCDPRIEPEFWQEWNDFEIE). Disordered regions lie at residues 948-969 (AAASKGTEKPTDTSAQEAQDAA) and 1003-1031 (TNANGIDEGGEETGEMANPDAIVMDEDEF).

This sequence belongs to the crooked-neck family. As to quaternary structure, associated with the spliceosome.

The protein localises to the nucleus. Its function is as follows. Involved in pre-mRNA splicing and cell cycle progression. In Cryptococcus neoformans var. neoformans serotype D (strain B-3501A) (Filobasidiella neoformans), this protein is Pre-mRNA-splicing factor SYF1 (SYF1).